A 459-amino-acid chain; its full sequence is MSLPHATIPTNLRRRAFRRSCDRCHAQKLKCTGSNANLVRAQCQRCQQAGLRCVYSERLPKRNLHKEAAAGTTRATETSQPMTATSSTVFSSLAETPPPYCSPPTHIGTSALKETLSEPSAATLQFYDTSINFDDPESFPGGWPQPNTFRDDANSNESSGIPDLGYDFEGPLDATAPVSPSLFDLEVEGNSSSGQSNTSNTQRDLFESLSDVSQDLEVILHGVTVEWPKQKILSYPIGDFLNAFGRLLLHLQERVITSSNSSMLDGCLQTKNLFMAVHCYMLSVKIMTSLSQLLLSEVMKAQPCGQKQSTRMDWYWSGSTTRNDNGRAEALPSFHSNLHIGELISHLDPFMHALSSACTTLRVSLRLLSEIETALGIAQEHGAAASIRLVLSDMPSTSWQILGAENKTITPASRLLSVLWSDEAGDEEPKSTKASGKTINVLRRCYKEIFALAKKHNIA.

A DNA-binding region (zn(2)-C6 fungal-type) is located at residues 21 to 53; that stretch reads CDRCHAQKLKCTGSNANLVRAQCQRCQQAGLRC. 2 disordered regions span residues 64-84 and 135-170; these read LHKE…PMTA and DPES…DFEG. Positions 69–78 are enriched in low complexity; sequence AAGTTRATET.

The protein localises to the nucleus. Functionally, transcription factor that regulates the gene cluster that mediates the biosynthesis of compactin, also known as mevastatin or ML-236B, and which acts as a potent competitive inhibitor of HMG-CoA reductase. Binds to the consensus-binding motif 5'-WCGG-N(6)-TCGG-3' of target genes. This chain is Transcription factor mlcR, found in Penicillium citrinum.